Reading from the N-terminus, the 69-residue chain is Antimicrobial peptide Eval36 (69 aa).

The first 23 residues, 1–23 (MKAQFAILVISMMLLQLIVQTES), serve as a signal peptide directing secretion. Leucine amide is present on leucine 37. Residues 38 to 69 (GKRGLRNLDDFQDFLDSDTSDADLRMLRDMFR) constitute a propeptide that is removed on maturation.

This sequence belongs to the non-disulfide-bridged peptide (NDBP) superfamily. Short antimicrobial peptide (group 4) family. In terms of tissue distribution, expressed by the venom gland.

It localises to the secreted. Functionally, probable antimicrobial peptide. Shows low inhibitory activity against herpes simplex virus type 1 (HSV-1). The polypeptide is Antimicrobial peptide Eval36 (Euscorpiops validus (Scorpion)).